Consider the following 182-residue polypeptide: Dephospho-CoA kinase (182 aa).

The DPCK domain maps to 4–182 (VVAITGGIGS…IINNDHKIMT (179 aa)). 12–17 (GSGKTT) contacts ATP.

This sequence belongs to the CoaE family.

The protein resides in the cytoplasm. The enzyme catalyses 3'-dephospho-CoA + ATP = ADP + CoA + H(+). Its pathway is cofactor biosynthesis; coenzyme A biosynthesis; CoA from (R)-pantothenate: step 5/5. Catalyzes the phosphorylation of the 3'-hydroxyl group of dephosphocoenzyme A to form coenzyme A. The sequence is that of Dephospho-CoA kinase from Aliivibrio fischeri (strain ATCC 700601 / ES114) (Vibrio fischeri).